The primary structure comprises 496 residues: 7,8-epoxymelianol synthase CYP88A154 (496 aa).

Residues 11–31 (FNFLWLILAIFVGTYVVLFGF) traverse the membrane as a helical segment. Residue Cys444 participates in heme binding.

It belongs to the cytochrome P450 family. Requires heme as cofactor.

The protein localises to the membrane. It catalyses the reaction melianol + reduced [NADPH--hemoprotein reductase] + O2 = 7,8-epoxymelianol + oxidized [NADPH--hemoprotein reductase] + H2O + H(+). The protein operates within secondary metabolite biosynthesis; terpenoid biosynthesis. Its function is as follows. Monooxygenase involved in the biosynthesis of glabretanes, limonoids and quassinoids triterpene natural products such as ailanthone, chaparrinone, glaucarubinone and amarolide, allelopathic degraded triterpene lactones inhibiting the growth of other plants, and possessing antimalarial, antifeedant, insecticidal, anti-inflammatory and anticancer activities. Catalyzes the epoxidation of melianol to produce 7,8-epoxymelianol. This Ailanthus altissima (Tree-of-heaven) protein is 7,8-epoxymelianol synthase CYP88A154.